A 575-amino-acid polypeptide reads, in one-letter code: E3 ubiquitin-protein ligase IpaH1.4 (575 aa).

Residues 1–270 (MIKSTNIQAI…PDYSGPQIFF (270 aa)) are interaction with target proteins. LRR repeat units follow at residues 69–90 (LQNQ…PDLP), 91–115 (PQIT…MLKV), 117–130 (HAQF…PALP), 131–150 (ETLE…PFLP), 151–170 (ENLT…PLLP), 171–195 (PELK…KLEG), 197–209 (ALAN…LPEL), and 210–233 (PFSM…VLRL). Residues 271-281 (SMGNSATISAP) form a linker region. The interval 282–575 (EHSLADAVTA…LSENGSNHIA (294 aa)) is E3 ubiquitin-protein ligase catalytic domain. The NEL domain maps to 284 to 575 (SLADAVTAWF…LSENGSNHIA (292 aa)). The active-site Glycyl thioester intermediate is the Cys-368.

This sequence belongs to the LRR-containing bacterial E3 ligase family. Interacts with human RBCK1/HOIL-1 and RNF31/HOIP components of the LUBAC complex. Post-translationally, ubiquitinated in the presence of host E1 ubiquitin-activating enzyme, E2 ubiquitin-conjugating enzyme and ubiquitin.

It localises to the secreted. It is found in the host cytoplasm. The enzyme catalyses S-ubiquitinyl-[E2 ubiquitin-conjugating enzyme]-L-cysteine + [acceptor protein]-L-lysine = [E2 ubiquitin-conjugating enzyme]-L-cysteine + N(6)-ubiquitinyl-[acceptor protein]-L-lysine.. It participates in protein modification; protein ubiquitination. Exists in an autoinhibited state in the absence of substrate protein, probably due to interactions of the leucine-rich repeat domain with the catalytic domain. Is activated upon binding to a substrate protein. Functionally, E3 ubiquitin-protein ligase effector that inhibits host cell innate immunity during bacterial infection by catalyzing 'Lys-48'-linked polyubiquitination and subsequent degradation of host RNF31/HOIP and RBCK1/HOIL-1. Host RNF31/HOIP is the catalytic component of the LUBAC complex, which conjugates linear ('Met-1'-linked) polyubiquitin chains at the surface of bacteria invading the host cytosol to form the ubiquitin coat surrounding bacteria. The bacterial ubiquitin coat acts as an 'eat-me' signal for xenophagy and promotes NF-kappa-B activation. By promoting degradation of host RNF31/HOIP, IpaH1.4 prevents formation of the bacterial ubiquitin coat and activation of host cell innate immunity. This Shigella flexneri protein is E3 ubiquitin-protein ligase IpaH1.4.